Consider the following 266-residue polypeptide: DNA damage-regulated autophagy modulator protein 2 (266 aa).

6 helical membrane passes run 8–28, 53–73, 88–108, 118–138, 160–180, and 207–227; these read LSFL…FSYI, KCLF…TIYV, IIKL…GLSI, FAAH…YMFV, LLLV…SSVL, and ITTA…LTYI.

Belongs to the DRAM/TMEM150 family. In terms of tissue distribution, expression is down-regulated in ovarian tumors (at protein level). Widely expressed with highest levels in placenta and heart. Expressed in the retina. Not detected in brain or thymus.

It localises to the lysosome membrane. Its subcellular location is the photoreceptor inner segment. The protein resides in the apical cell membrane. Its function is as follows. Plays a role in the initiation of autophagy. In the retina, might be involved in the process of photoreceptor cells renewal and recycling to preserve visual function. Induces apoptotic cell death when coexpressed with DRAM1. The chain is DNA damage-regulated autophagy modulator protein 2 (DRAM2) from Homo sapiens (Human).